A 622-amino-acid polypeptide reads, in one-letter code: Chaperone protein HscA homolog (622 aa).

Belongs to the heat shock protein 70 family.

Chaperone involved in the maturation of iron-sulfur cluster-containing proteins. Has a low intrinsic ATPase activity which is markedly stimulated by HscB. In Burkholderia thailandensis (strain ATCC 700388 / DSM 13276 / CCUG 48851 / CIP 106301 / E264), this protein is Chaperone protein HscA homolog.